A 609-amino-acid chain; its full sequence is MTQDYDNKRPVLVLQNDGLYQQRRSYTNEDEAWKSFLENPLTAATKAMMSINGDEDSAAALGLLYDYYKVPRERRLSAAKQEHDHADHEHSKRNGLPQINEQALLPDNRVQVLKTVPFNIVVPLANQVDKRGHLTTPDTTAAVSIAHPIKTESQSHCFSVGLQSVFHTEPTERIVAFDRAVPSDHFTSNNQPPNSQRRTPDSTFSETYKEDVPEVFFPPDLSLRMGSMNSEDYVFDSVAGNNFEYTLEASKSLRPKPGDSTMTYLNKGQFYPITLKEIGSNKGIHHPISKVRSVIMVVFADDKSREDQLRHWKYWHSRQHTAKQRCIDIADYKESFNTISNIEEIAYNAISFTWDLNDEGKVFISVNCLSTDFSSQKGVKGLPLNLQIDTYSYNNRSNKPVHRAYCQIKVFCDKGAERKIRDEERKQSKRKVQDVKVGLLPTHKRTDITVFKPMMDLDTQPVLFIPDVHFANLQRTTHVLPISPEDMEGELNPGMKRLPFSPEEDFNTPPAKLPRVDEPKRVLLYVRRETEEVFDALMLKTPTLKGLMEAVSEKYEVPIEKIGKIFKKCKKGILVNMDDNIIKHYSNEDTFHLQIEESGGSYKLTLTEI.

A transcription activation region spans residues 1–91 (MTQDYDNKRP…EHDHADHEHS (91 aa)). Residues 183-207 (SDHFTSNNQPPNSQRRTPDSTFSET) are disordered. The segment covering 185–206 (HFTSNNQPPNSQRRTPDSTFSE) has biased composition (polar residues). The Grh/CP2 DB domain occupies 239–465 (AGNNFEYTLE…DLDTQPVLFI (227 aa)). Interaction with DNA regions lie at residues 371 to 380 (TDFSSQKGVK) and 418 to 421 (RKIR).

It belongs to the grh/CP2 family. Grainyhead subfamily. In terms of assembly, binds DNA as homodimer.

The protein localises to the nucleus. Transcription factor involved in epithelial development. Binds directly to the consensus DNA sequence 5'-AACCGGTT-3' and modulates expression of epidermal-specific genes, including XK81A1. Important regulator of DSG1 in the context of epidermal differentiation. Regulates the maintenance of skin barrier. No genetic interaction with GRHL3, nor functional cooperativity due to diverse target gene selectivity during epithelia development. Functions downstream of BMP-signaling cascade modulating endogenous bmp4-responsive targets. The protein is Grainyhead-like protein 1 homolog of Xenopus laevis (African clawed frog).